We begin with the raw amino-acid sequence, 424 residues long: Serine--tRNA ligase (424 aa).

231-233 provides a ligand contact to L-serine; that stretch reads TAE. Position 262 to 264 (262 to 264) interacts with ATP; that stretch reads RSE. Residue Glu285 coordinates L-serine. Position 349-352 (349-352) interacts with ATP; the sequence is EISS. Ser385 contributes to the L-serine binding site.

Belongs to the class-II aminoacyl-tRNA synthetase family. Type-1 seryl-tRNA synthetase subfamily. In terms of assembly, homodimer. The tRNA molecule binds across the dimer.

It is found in the cytoplasm. It catalyses the reaction tRNA(Ser) + L-serine + ATP = L-seryl-tRNA(Ser) + AMP + diphosphate + H(+). It carries out the reaction tRNA(Sec) + L-serine + ATP = L-seryl-tRNA(Sec) + AMP + diphosphate + H(+). The protein operates within aminoacyl-tRNA biosynthesis; selenocysteinyl-tRNA(Sec) biosynthesis; L-seryl-tRNA(Sec) from L-serine and tRNA(Sec): step 1/1. Its function is as follows. Catalyzes the attachment of serine to tRNA(Ser). Is also able to aminoacylate tRNA(Sec) with serine, to form the misacylated tRNA L-seryl-tRNA(Sec), which will be further converted into selenocysteinyl-tRNA(Sec). This is Serine--tRNA ligase from Bacillus cereus (strain ATCC 10987 / NRS 248).